The following is a 670-amino-acid chain: Acetolactate synthase, chloroplastic (670 aa).

Low complexity-rich tracts occupy residues Met1 to Ser48 and Lys55 to Ser77. The transit peptide at Met1–Lys55 directs the protein to the chloroplast. A disordered region spans residues Met1–Asp94. Glu144 is a thiamine diphosphate binding site. Ser186 provides a ligand contact to FAD. A thiamine diphosphate-binding site is contributed by Gln207. Positions 220 and 246 each coordinate (R)-imazaquin. Arg246 contributes to the FAD binding site. Lys256 is a binding site for chlorimuron-ethyl. FAD contacts are provided by residues Gly308 and Thr331–Leu332. Cysteine sulfinic acid (-SO2H) is present on Cys340. FAD is bound by residues Leu349–His352 and Gly371–Asp375. Residue Asp376–Arg377 participates in chlorimuron-ethyl binding. FAD contacts are provided by residues Asp395–Ile396 and Asp414–Val415. Positions Asp414–Val446 form a coiled coil. Position 487 to 488 (Gln487 to His488) interacts with thiamine diphosphate. Position 508–509 (Gly508–Gly509) interacts with FAD. Thiamine diphosphate-binding positions include Gly511 to Met513, Asp538 to Ser540, and Asn565 to Met570. 3 residues coordinate Mg(2+): Asp538, Asn565, and His567. 2 residues coordinate chlorimuron-ethyl: Trp574 and Ser653.

This sequence belongs to the TPP enzyme family. Homodimer or homotetramer. The acetolactate synthase complex contains both large catalytic subunits and small regulatory subunits. Homodimer. The acetolactate synthase complex contains 4 homodimers of the large catalytic subunits, and 1 homotetramer of the small regulatory subunits. The cofactor is Mg(2+). It depends on FAD as a cofactor. Requires thiamine diphosphate as cofactor.

Its subcellular location is the plastid. The protein localises to the chloroplast. The catalysed reaction is 2 pyruvate + H(+) = (2S)-2-acetolactate + CO2. The protein operates within amino-acid biosynthesis; L-isoleucine biosynthesis; L-isoleucine from 2-oxobutanoate: step 1/4. Its pathway is amino-acid biosynthesis; L-valine biosynthesis; L-valine from pyruvate: step 1/4. With respect to regulation, inhibited by asymmetric aryl disulfides, triazolopyrimidine sulfonanilide compounds, isatin derivatives, and sulfonylurea and imidazolinone herbicides. Insensitive to feed-back inhibition by branched-chain amino acids. Catalyzes the formation of acetolactate from pyruvate, the first step in valine and isoleucine biosynthesis. The sequence is that of Acetolactate synthase, chloroplastic (ALS) from Arabidopsis thaliana (Mouse-ear cress).